Consider the following 208-residue polypeptide: 3-isopropylmalate dehydratase small subunit 2 (208 aa).

The protein belongs to the LeuD family. LeuD type 1 subfamily. In terms of assembly, heterodimer of LeuC and LeuD.

The catalysed reaction is (2R,3S)-3-isopropylmalate = (2S)-2-isopropylmalate. It participates in amino-acid biosynthesis; L-leucine biosynthesis; L-leucine from 3-methyl-2-oxobutanoate: step 2/4. Its function is as follows. Catalyzes the isomerization between 2-isopropylmalate and 3-isopropylmalate, via the formation of 2-isopropylmaleate. This Salmonella choleraesuis (strain SC-B67) protein is 3-isopropylmalate dehydratase small subunit 2.